The chain runs to 228 residues: Cytidylate kinase (228 aa).

An ATP-binding site is contributed by 17-25; that stretch reads GPTASGKGT.

This sequence belongs to the cytidylate kinase family. Type 1 subfamily.

It is found in the cytoplasm. The catalysed reaction is CMP + ATP = CDP + ADP. It catalyses the reaction dCMP + ATP = dCDP + ADP. In Burkholderia ambifaria (strain ATCC BAA-244 / DSM 16087 / CCUG 44356 / LMG 19182 / AMMD) (Burkholderia cepacia (strain AMMD)), this protein is Cytidylate kinase.